A 138-amino-acid chain; its full sequence is ATP synthase epsilon chain (138 aa).

Belongs to the ATPase epsilon chain family. F-type ATPases have 2 components, CF(1) - the catalytic core - and CF(0) - the membrane proton channel. CF(1) has five subunits: alpha(3), beta(3), gamma(1), delta(1), epsilon(1). CF(0) has three main subunits: a, b and c.

The protein localises to the cell membrane. In terms of biological role, produces ATP from ADP in the presence of a proton gradient across the membrane. The chain is ATP synthase epsilon chain from Streptococcus equi subsp. zooepidemicus (strain H70).